Here is a 164-residue protein sequence, read N- to C-terminus: Small ribosomal subunit protein uS5 (164 aa).

The 64-residue stretch at 10-73 folds into the S5 DRBM domain; that stretch reads LEERVVAINR…EAAKKNLIEV (64 aa).

Belongs to the universal ribosomal protein uS5 family. Part of the 30S ribosomal subunit. Contacts proteins S4 and S8.

Functionally, with S4 and S12 plays an important role in translational accuracy. In terms of biological role, located at the back of the 30S subunit body where it stabilizes the conformation of the head with respect to the body. The chain is Small ribosomal subunit protein uS5 from Streptococcus thermophilus (strain CNRZ 1066).